Consider the following 778-residue polypeptide: Molybdenum cofactor sulfurase (778 aa).

Lys-235 carries the post-translational modification N6-(pyridoxal phosphate)lysine. Residue Cys-399 is part of the active site. 2 disordered regions span residues 576–596 and 654–673; these read LSKN…SRVC and ARPA…DTEK. Over residues 584–594 the composition is skewed to low complexity; the sequence is RSSSSRSRSSR. The MOSC domain occupies 651–778; it reads LPTARPALPG…ETAERARSRL (128 aa).

It belongs to the class-V pyridoxal-phosphate-dependent aminotransferase family. MOCOS subfamily. Pyridoxal 5'-phosphate is required as a cofactor.

The enzyme catalyses Mo-molybdopterin + L-cysteine + AH2 = thio-Mo-molybdopterin + L-alanine + A + H2O. It participates in cofactor biosynthesis; molybdopterin biosynthesis. In terms of biological role, sulfurates the molybdenum cofactor. Sulfation of molybdenum is essential for xanthine dehydrogenase (XDH) and aldehyde oxidase (ADO) enzymes in which molybdenum cofactor is liganded by 1 oxygen and 1 sulfur atom in active form. In Chaetomium globosum (strain ATCC 6205 / CBS 148.51 / DSM 1962 / NBRC 6347 / NRRL 1970) (Soil fungus), this protein is Molybdenum cofactor sulfurase.